The primary structure comprises 387 residues: MSKRDYYEILEVSATASEGEIKKAYRKLAMRYHPDRNPDDEEAEDKFKEASEAYEVLSDAQKRQAYDQFGHAGVDGSAGQGGFGGGGFADFGDIFGDIFGGGFGGGHRGPQPGSDLQYELEVSLEDAVAGTTVDVRIPTKELCESCDGSGAEPGSDVQTCPTCQGIGQVRVQQGFFAVSRTCPNCHGTGKLVKTPCKTCRGEGYKHSSKTLSVKIPAGVDNGDRIRLQGEGEAGEPGAPHGDLYVRIRVKEHKIFQRDGNTLFCDMPLSFATATLGGTMDVPTLNGKANLKIPAGTQSGQRFKLAGKGVKSVRSSHVGDMIVEVHIETPVKLTSEQKELLKAFDESLQGKHHKQHSPKTHSFFDSVKAFFKGDDEDGGNDKKDGPWN.

Residues 5-70 (DYYEILEVSA…QKRQAYDQFG (66 aa)) form the J domain. The CR-type zinc finger occupies 130–208 (GTTVDVRIPT…CRGEGYKHSS (79 aa)). Residues C143, C146, C160, C163, C182, C185, C196, and C199 each coordinate Zn(2+). 4 CXXCXGXG motif repeats span residues 143-150 (CESCDGSG), 160-167 (CPTCQGIG), 182-189 (CPNCHGTG), and 196-203 (CKTCRGEG).

Belongs to the DnaJ family. In terms of assembly, homodimer. It depends on Zn(2+) as a cofactor.

It localises to the cytoplasm. Functionally, participates actively in the response to hyperosmotic and heat shock by preventing the aggregation of stress-denatured proteins and by disaggregating proteins, also in an autonomous, DnaK-independent fashion. Unfolded proteins bind initially to DnaJ; upon interaction with the DnaJ-bound protein, DnaK hydrolyzes its bound ATP, resulting in the formation of a stable complex. GrpE releases ADP from DnaK; ATP binding to DnaK triggers the release of the substrate protein, thus completing the reaction cycle. Several rounds of ATP-dependent interactions between DnaJ, DnaK and GrpE are required for fully efficient folding. Also involved, together with DnaK and GrpE, in the DNA replication of plasmids through activation of initiation proteins. The sequence is that of Chaperone protein DnaJ from Hydrogenovibrio crunogenus (strain DSM 25203 / XCL-2) (Thiomicrospira crunogena).